Here is a 460-residue protein sequence, read N- to C-terminus: Diguanylate cyclase DosC (460 aa).

Position 98 (His98) interacts with heme. A GGDEF domain is found at 325-458; the sequence is TPLSVLIIDV…GRNRVELWKA (134 aa). Asp333 contributes to the Mg(2+) binding site. Asn341 and Asp350 together coordinate substrate. Position 376 (Asp376) interacts with Mg(2+). Residue Asp376 is the Proton acceptor of the active site.

It depends on heme as a cofactor. Mg(2+) serves as cofactor.

It carries out the reaction 2 GTP = 3',3'-c-di-GMP + 2 diphosphate. Its pathway is purine metabolism; 3',5'-cyclic di-GMP biosynthesis. Globin-coupled heme-based oxygen sensor protein displaying diguanylate cyclase (DGC) activity in response to oxygen availability. Thus, catalyzes the synthesis of cyclic diguanylate (c-di-GMP) via the condensation of 2 GTP molecules. Cyclic-di-GMP is a second messenger which controls cell surface-associated traits in bacteria. The protein is Diguanylate cyclase DosC (dosC) of Escherichia coli O157:H7.